Reading from the N-terminus, the 358-residue chain is Valine dehydrogenase (358 aa).

Residue lysine 88 is part of the active site. 188 to 194 (GVGKVGH) provides a ligand contact to NAD(+).

The protein belongs to the Glu/Leu/Phe/Val dehydrogenases family. Homodimer.

Its subcellular location is the cytoplasm. The catalysed reaction is L-valine + NAD(+) + H2O = 3-methyl-2-oxobutanoate + NH4(+) + NADH + H(+). It participates in amino-acid degradation; L-valine degradation. In terms of biological role, oxidative deamination of branched-chain amino acids. The catabolism of valine is the major source of fatty acid precursors for macrolide biosynthesis and a vital source of antibiotic precursors. This is Valine dehydrogenase (vdh) from Streptomyces virginiae (Streptomyces cinnamonensis).